Reading from the N-terminus, the 365-residue chain is MKHNRLAIAALAPVLILVGCSTPLERRQASGGFDYLEQPAPTPLVVPAGLDAPRLSREFDIPKLGDNAERDVVGPRLDVRPPLQVLPLAPGTRIQDGVDSITVLVESNQDDIDLAQEIHDTLLKFLDDKSINVARDDSGVIVTDWIENEEVIGKSWFRDKVYQIRQRYEFDTVVKDHGRSGSITIELVDHEEGLDGVDDSIVLTDADRRRYAIDMLNNAIAYMNFERQQRQATQELLNGRGIKTELGFDSDENTAFVAEASFDQVWRRMDKVLPLLGFQVRDLDQQLATYFVDYEPDGGFWASLWGDNDELPLEEGPYQIRLEPMGERTAITLMDNEANPLPTETVTQMYNRFAELLQKESRDLQ.

The signal sequence occupies residues 1–19 (MKHNRLAIAALAPVLILVG). Cys-20 carries N-palmitoyl cysteine lipidation. The S-diacylglycerol cysteine moiety is linked to residue Cys-20.

It belongs to the BamC family. In terms of assembly, part of the Bam complex.

The protein resides in the cell outer membrane. Functionally, part of the outer membrane protein assembly complex, which is involved in assembly and insertion of beta-barrel proteins into the outer membrane. The sequence is that of Outer membrane protein assembly factor BamC from Ferrimonas balearica (strain DSM 9799 / CCM 4581 / KCTC 23876 / PAT).